Reading from the N-terminus, the 300-residue chain is Acetyl-coenzyme A carboxylase carboxyl transferase subunit beta 1 (300 aa).

The CoA carboxyltransferase N-terminal domain occupies 26-294 (MWVKCPSCGD…HTSAAQHVPA (269 aa)). Zn(2+) is bound by residues Cys30, Cys33, Cys49, and Cys51. Residues 30–51 (CPSCGDLIYTRQFSDNLKVCKC) form a C4-type zinc finger.

The protein belongs to the AccD/PCCB family. In terms of assembly, acetyl-CoA carboxylase is a heterohexamer composed of biotin carboxyl carrier protein (AccB), biotin carboxylase (AccC) and two subunits each of ACCase subunit alpha (AccA) and ACCase subunit beta (AccD). It depends on Zn(2+) as a cofactor.

The protein localises to the cytoplasm. It carries out the reaction N(6)-carboxybiotinyl-L-lysyl-[protein] + acetyl-CoA = N(6)-biotinyl-L-lysyl-[protein] + malonyl-CoA. It functions in the pathway lipid metabolism; malonyl-CoA biosynthesis; malonyl-CoA from acetyl-CoA: step 1/1. Component of the acetyl coenzyme A carboxylase (ACC) complex. Biotin carboxylase (BC) catalyzes the carboxylation of biotin on its carrier protein (BCCP) and then the CO(2) group is transferred by the transcarboxylase to acetyl-CoA to form malonyl-CoA. This Roseiflexus sp. (strain RS-1) protein is Acetyl-coenzyme A carboxylase carboxyl transferase subunit beta 1.